Here is a 302-residue protein sequence, read N- to C-terminus: Endochitinase 2 (302 aa).

A Chitin-binding type-1 domain is found at 1–42 (EQCGRQAGGALCPGGLCCSQFGWCGSTADYCTVPGCQSQCSG). Cystine bridges form between Cys3–Cys18, Cys12–Cys24, Cys17–Cys31, Cys36–Cys40, Cys73–Cys136, Cys148–Cys156, and Cys255–Cys287. The active-site Proton donor is Glu117. The propeptide at 296–302 (GVSVDSM) is removed in mature form.

The protein belongs to the glycosyl hydrolase 19 family. Chitinase class I subfamily.

The enzyme catalyses Random endo-hydrolysis of N-acetyl-beta-D-glucosaminide (1-&gt;4)-beta-linkages in chitin and chitodextrins.. Its function is as follows. Defense against chitin-containing fungal pathogens. In Gossypium hirsutum (Upland cotton), this protein is Endochitinase 2.